The sequence spans 294 residues: Thymidylate synthase (294 aa).

DUMP-binding positions include R31 and 156 to 157; that span reads RR. Catalysis depends on C176, which acts as the Nucleophile. DUMP contacts are provided by residues 196 to 199, N207, and 237 to 239; these read RSAD and HIY. Residue D199 participates in (6R)-5,10-methylene-5,6,7,8-tetrahydrofolate binding. (6R)-5,10-methylene-5,6,7,8-tetrahydrofolate is bound at residue A293.

This sequence belongs to the thymidylate synthase family. As to quaternary structure, homodimer.

The enzyme catalyses dUMP + (6R)-5,10-methylene-5,6,7,8-tetrahydrofolate = 7,8-dihydrofolate + dTMP. Its pathway is pyrimidine metabolism; dTTP biosynthesis. In Saimiri sciureus (Common squirrel monkey), this protein is Thymidylate synthase (70).